Reading from the N-terminus, the 68-residue chain is Copper transport protein ATOX1 (68 aa).

The region spanning 1–63 (MPKHEFSVDM…TLKKTGKTVS (63 aa)) is the HMA domain. The Cu cation site is built by cysteine 12 and cysteine 15. Residue serine 47 is modified to Phosphoserine. An N6-acetyllysine modification is found at lysine 60.

It belongs to the ATX1 family. Homodimer. Interacts with ATP7B. Interacts with ATP7A. Interacts (via dimer form) with SLC31A1 (via C-terminal domain); this interaction improves ATOX1 stability and controls intracellular Cu(I) levels. As to expression, ubiquitous.

In terms of biological role, binds and deliver cytosolic copper to the copper ATPase proteins. May be important in cellular antioxidant defense. This chain is Copper transport protein ATOX1, found in Homo sapiens (Human).